Reading from the N-terminus, the 519-residue chain is uncharacterized protein (519 aa).

Helical transmembrane passes span 141–161 (GSSL…ANVF), 202–222 (LGET…WALA), 385–405 (FVVR…PFVG), and 433–453 (TVVP…AELV).

It is found in the cell membrane. This is an uncharacterized protein from Sinorhizobium fredii (strain NBRC 101917 / NGR234).